Consider the following 222-residue polypeptide: Coiled-coil domain-containing protein 70 (222 aa).

2 coiled-coil regions span residues 34 to 62 (LQEE…WNFR) and 129 to 188 (NALW…KAAW).

The polypeptide is Coiled-coil domain-containing protein 70 (CCDC70) (Bos taurus (Bovine)).